We begin with the raw amino-acid sequence, 456 residues long: Enolase (456 aa).

Gln164 contacts (2R)-2-phosphoglycerate. The active-site Proton donor is the Glu207. The Mg(2+) site is built by Asp244, Glu287, and Asp314. (2R)-2-phosphoglycerate-binding residues include Lys339, Arg368, Ser369, and Lys390. Residue Lys339 is the Proton acceptor of the active site.

The protein belongs to the enolase family. As to quaternary structure, component of the RNA degradosome, a multiprotein complex involved in RNA processing and mRNA degradation. Requires Mg(2+) as cofactor.

The protein resides in the cytoplasm. It localises to the secreted. It is found in the cell surface. It catalyses the reaction (2R)-2-phosphoglycerate = phosphoenolpyruvate + H2O. It functions in the pathway carbohydrate degradation; glycolysis; pyruvate from D-glyceraldehyde 3-phosphate: step 4/5. In terms of biological role, catalyzes the reversible conversion of 2-phosphoglycerate (2-PG) into phosphoenolpyruvate (PEP). It is essential for the degradation of carbohydrates via glycolysis. In Francisella tularensis subsp. novicida (strain U112), this protein is Enolase.